Here is a 207-residue protein sequence, read N- to C-terminus: Small ribosomal subunit protein uS10m (207 aa).

Residues 1–24 (MLSVFGLRTVARCNSTLASGGARA) constitute a mitochondrion transit peptide.

It belongs to the universal ribosomal protein uS10 family. Part of the mitochondrial small ribosomal subunit.

It localises to the mitochondrion. Functionally, involved in mitochondrial genome encoded proteins translation. Involved in the binding of tRNA to the ribosomes. This Eremothecium gossypii (strain ATCC 10895 / CBS 109.51 / FGSC 9923 / NRRL Y-1056) (Yeast) protein is Small ribosomal subunit protein uS10m (RSM10).